Here is a 153-residue protein sequence, read N- to C-terminus: SsrA-binding protein (153 aa).

The tract at residues glutamate 131 to arginine 153 is disordered.

The protein belongs to the SmpB family.

The protein localises to the cytoplasm. Its function is as follows. Required for rescue of stalled ribosomes mediated by trans-translation. Binds to transfer-messenger RNA (tmRNA), required for stable association of tmRNA with ribosomes. tmRNA and SmpB together mimic tRNA shape, replacing the anticodon stem-loop with SmpB. tmRNA is encoded by the ssrA gene; the 2 termini fold to resemble tRNA(Ala) and it encodes a 'tag peptide', a short internal open reading frame. During trans-translation Ala-aminoacylated tmRNA acts like a tRNA, entering the A-site of stalled ribosomes, displacing the stalled mRNA. The ribosome then switches to translate the ORF on the tmRNA; the nascent peptide is terminated with the 'tag peptide' encoded by the tmRNA and targeted for degradation. The ribosome is freed to recommence translation, which seems to be the essential function of trans-translation. The polypeptide is SsrA-binding protein (Parabacteroides distasonis (strain ATCC 8503 / DSM 20701 / CIP 104284 / JCM 5825 / NCTC 11152)).